The following is a 512-amino-acid chain: MAFLDYPPFDICTIQQLLTFIIISYTFYLTTRSIWRLYFHPLSKYPGPKVAAISDIWYAYHALAGRWPWAVADALEKYGDVVRIAPNEIAFVTPKALSDIYGSHNKNLENFAKTQINNHGNDEHGGLIWEWDPARHREVARQLSPAFSGRALRAKEATLHKYIDLFVERMTTLGGETGGVSLPTWINWLCVDISADMAYNREMNALKDMKEPPYLSILSGFNRAVVVTQMSWRFPLLSPLKGLFLAITAMRSHSHIRNHSRFQLEQRIRRKGAVEHLDFFEQLIPENREPPKDRKEMRHLEQVAGQLLVAGYEPPALWFYFTIYYLLKNPATLDTLTKEIRSAFKNYDEITSGSAAQLAYLSACLSESLRIMPGVLTGMPVVSPGAMVDGTYIPKGVVCQSSSLALARSPRNFRHALSFRPERWLQEDHALYDAQFAQDNRKGFQPFSQGPRICAGKEIAWWQSRVFLAKVLWTFDLEMVSGQQIDMARDLRGWGMYDKPEIRVRFRPKFVV.

Cys-454 lines the heme pocket.

Belongs to the cytochrome P450 family. Heme serves as cofactor.

It participates in secondary metabolite biosynthesis. In terms of biological role, cytochrome P450 monooxygenase; part of the gene cluster that mediates the biosynthesis of wortmanamides A and B, reduced long-chain polyketides amidated with a specific omega-amino acid, 5-aminopentanoic acid (5PA). The PKS modules of TwmB are involved in the synthesis of the polyketide backbone, whereas the non-canonical C domain of TwmB is a bonafide condensation domain that specifically selects 5PA and catalyzes amidation to release polyketide chain. The C domain clearly prefers C16 and C18 fatty acyl substrates, which is consistent with simultaneous formation of both octaketide and nonaketide acyl amides wortmanamides A and B. Because TwmB lacks a designated enoylreductase (ER) domain, the required activity is provided the enoyl reductase TwmE. The roles of the remaining enzymes have still to be clarified. In Talaromyces wortmannii (Penicillium wortmannii), this protein is Cytochrome P450 monooxygenase TwmD.